The chain runs to 461 residues: Fumarate hydratase class II (461 aa).

Substrate-binding positions include 97–99 (SGT), 127–130 (HPND), 137–139 (SSN), and threonine 185. Histidine 186 (proton donor/acceptor) is an active-site residue. Serine 316 is an active-site residue. Substrate is bound by residues serine 317 and 322–324 (KVN).

Belongs to the class-II fumarase/aspartase family. Fumarase subfamily. Homotetramer.

It is found in the cytoplasm. It catalyses the reaction (S)-malate = fumarate + H2O. The protein operates within carbohydrate metabolism; tricarboxylic acid cycle; (S)-malate from fumarate: step 1/1. Functionally, involved in the TCA cycle. Catalyzes the stereospecific interconversion of fumarate to L-malate. In Staphylococcus saprophyticus subsp. saprophyticus (strain ATCC 15305 / DSM 20229 / NCIMB 8711 / NCTC 7292 / S-41), this protein is Fumarate hydratase class II.